A 344-amino-acid polypeptide reads, in one-letter code: 1-acyl-sn-glycerol-3-phosphate acyltransferase BAT2, chloroplastic (344 aa).

The N-terminal 49 residues, 1-49 (MDVASAPGVSSHPPYYSKPICSSQSSLIRIPINKGCCFARSSNLITSLH), are a transit peptide targeting the chloroplast. The helical transmembrane segment at 113-133 (GICFCLVAGVSAIVLIVLMIT) threads the bilayer. The HXXXXD motif motif lies at 188–193 (HQSFLD). A helical transmembrane segment spans residues 210-230 (TGIFVIPVIGWAMSMMGVVPL).

This sequence belongs to the 1-acyl-sn-glycerol-3-phosphate acyltransferase family. As to expression, widely expressed.

The protein localises to the plastid. Its subcellular location is the chloroplast membrane. The enzyme catalyses a fatty acyl-[ACP] + a 1-acyl-sn-glycero-3-phosphate = a 1,2-diacyl-sn-glycero-3-phosphate + holo-[ACP]. It catalyses the reaction a 1-acyl-sn-glycero-3-phosphate + an acyl-CoA = a 1,2-diacyl-sn-glycero-3-phosphate + CoA. Its pathway is phospholipid metabolism; CDP-diacylglycerol biosynthesis; CDP-diacylglycerol from sn-glycerol 3-phosphate: step 2/3. In terms of biological role, plastidial enzyme of the prokaryotic glycerol-3-phosphate pathway that converts lysophosphatidic acid (LPA) into phosphatidic acid by incorporating an acyl moiety at position sn-2. Utilizes palmitoyl-ACP (16:0-ACP) to produce phosphatidic acid containing a saturated group at position sn-2, which is characteristic of lipids synthesized by the prokaryotic pathway. In vitro, can use 16:0-CoA as acyl donor. The sequence is that of 1-acyl-sn-glycerol-3-phosphate acyltransferase BAT2, chloroplastic from Brassica napus (Rape).